An 897-amino-acid chain; its full sequence is Protein transport protein SEC24-1 (897 aa).

4 residues coordinate Zn(2+): C213, C216, C235, and C238. The segment at 213–238 is zinc finger-like; that stretch reads CRRCRSYINPFAKFIEQGRRWRCNFC.

This sequence belongs to the SEC23/SEC24 family. SEC24 subfamily. As to quaternary structure, the COPII coat is composed of at least 5 proteins: the SEC23/24 complex, the SEC13/31 complex, and the protein SAR1. Golgi apparatus membrane; Peripheral membrane protein; Cytoplasmic side.

It is found in the cytoplasm. The protein localises to the cytoplasmic vesicle. It localises to the COPII-coated vesicle membrane. Its subcellular location is the endoplasmic reticulum membrane. The protein resides in the golgi apparatus membrane. Component of the coat protein complex II (COPII) which promotes the formation of transport vesicles from the endoplasmic reticulum (ER). The coat has two main functions, the physical deformation of the endoplasmic reticulum membrane into vesicles and the selection of cargo molecules. The protein is Protein transport protein SEC24-1 (SEC241) of Candida glabrata (strain ATCC 2001 / BCRC 20586 / JCM 3761 / NBRC 0622 / NRRL Y-65 / CBS 138) (Yeast).